Reading from the N-terminus, the 233-residue chain is Orotidine 5'-phosphate decarboxylase (233 aa).

Residues Asp-9, Lys-31, 58–67 (DLKLHDIPNT), Thr-120, Arg-182, Gln-191, Gly-211, and Arg-212 contribute to the substrate site. Lys-60 serves as the catalytic Proton donor.

Belongs to the OMP decarboxylase family. Type 1 subfamily. Homodimer.

The catalysed reaction is orotidine 5'-phosphate + H(+) = UMP + CO2. It participates in pyrimidine metabolism; UMP biosynthesis via de novo pathway; UMP from orotate: step 2/2. Functionally, catalyzes the decarboxylation of orotidine 5'-monophosphate (OMP) to uridine 5'-monophosphate (UMP). This is Orotidine 5'-phosphate decarboxylase from Listeria monocytogenes serotype 4a (strain HCC23).